The primary structure comprises 55 residues: Large ribosomal subunit protein bL33 (55 aa).

This sequence belongs to the bacterial ribosomal protein bL33 family.

In Clavibacter sepedonicus (Clavibacter michiganensis subsp. sepedonicus), this protein is Large ribosomal subunit protein bL33.